A 486-amino-acid chain; its full sequence is MSGSTPFQMRLVHLDLKGAPPKVSYLSEIFPLFRALGANGLLIEYEDMFPYEGPLRLLRAKYAYSPSEIKEILHLAGLNELEVIPLVQTFGHMEFVLKHTAFAHLREVGSFPCTLNPHEAESLALVGAMIDQVLELHPGAQRLHIGCDEVYYLGEGEASRRWLQQEQNSTGKLCLSHMRAVASGVKARRPSVTPLVWDDMLRDLPEDQLAASGVPQLVEPVLWDYTADLDVHGKVLLMQKYRRCGFPQLWAASAFKGATGPSQAVPPVEHHLRNHVQWLQVAGSGPTDSLQGIILTGWQRYDHYSVLCELLPAGVPSLAACLQLLLRGGFDEDVKAKVENLLGISSLEKTDPVREGAGSFPGSNILALVTQVSLHLRSSVDALLEGNRYVTGWFSPYHRQRKLIHPVMVQHIQPAALSLLAQWSTLVQELEAALQLAFYPDAVEEWLEENVHPSLQRLQALLQDLSEVSAPPLPPTSPGRDVAQDP.

The Proton donor role is filled by E149.

Belongs to the glycosyl hydrolase 20 family. In terms of assembly, homodimer; disulfide-linked. As to expression, expressed in synovial fibroblasts and synovial membranes.

It localises to the cytoplasm. It is found in the nucleus. The protein localises to the extracellular vesicle. It catalyses the reaction Hydrolysis of terminal non-reducing N-acetyl-D-hexosamine residues in N-acetyl-beta-D-hexosaminides.. With respect to regulation, inhibited by O-(2-acetamido-2-deoxy-D-glucopyranosylidene)amino N-phenylcarbamate (PUGNAc). Inhibited by galacto-NAG-thiazoline. Has hexosaminidase activity. Responsible for the cleavage of the monosaccharides N-acetylglucosamine (GlcNAc) and N-acetylgalactosamine (GalNAc) from cellular substrates. Has a preference for galactosaminide over glucosaminide substrates. The protein is Hexosaminidase D of Homo sapiens (Human).